A 202-amino-acid polypeptide reads, in one-letter code: LexA repressor (202 aa).

Residues 28-48 (RAEIAQRLGFRSPNAAEEHLK) constitute a DNA-binding region (H-T-H motif). Catalysis depends on for autocatalytic cleavage activity residues serine 119 and lysine 156.

The protein belongs to the peptidase S24 family. Homodimer.

It carries out the reaction Hydrolysis of Ala-|-Gly bond in repressor LexA.. In terms of biological role, represses a number of genes involved in the response to DNA damage (SOS response), including recA and lexA. Binds to the 16 bp palindromic sequence 5'-CTGTATATATATACAG-3'. In the presence of single-stranded DNA, RecA interacts with LexA causing an autocatalytic cleavage which disrupts the DNA-binding part of LexA, leading to derepression of the SOS regulon and eventually DNA repair. In Escherichia fergusonii (strain ATCC 35469 / DSM 13698 / CCUG 18766 / IAM 14443 / JCM 21226 / LMG 7866 / NBRC 102419 / NCTC 12128 / CDC 0568-73), this protein is LexA repressor.